The chain runs to 61 residues: Metallothionein-1 (61 aa).

At methionine 1 the chain carries N-acetylmethionine. Residues 1–29 form a beta region; the sequence is MDPNCSCSTGGSCTCTSSCACKNCKCTSC. A divalent metal cation-binding residues include cysteine 5, cysteine 7, cysteine 13, cysteine 15, cysteine 19, cysteine 21, cysteine 24, cysteine 26, cysteine 29, cysteine 33, cysteine 34, cysteine 36, cysteine 37, cysteine 41, cysteine 44, cysteine 48, cysteine 50, cysteine 57, cysteine 59, and cysteine 60. The tract at residues 30–61 is alpha; that stretch reads KKSCCSCCPVGCSKCAQGCVCKGAADKCTCCA.

Belongs to the metallothionein superfamily. Type 1 family.

Functionally, metallothioneins have a high content of cysteine residues that bind various heavy metals; these proteins are transcriptionally regulated by both heavy metals and glucocorticoids. The sequence is that of Metallothionein-1 (Mt1) from Mus musculus (Mouse).